Reading from the N-terminus, the 790-residue chain is Penicillin-binding protein 1A (790 aa).

Residues 1–6 (MYKSLL) lie on the Cytoplasmic side of the membrane. The chain crosses the membrane as a helical; Signal-anchor for type II membrane protein span at residues 7 to 27 (FCLKIFVFLILVGCGITAYII). Topologically, residues 28–790 (YHYSRDLPDY…SKEDQSQEIY (763 aa)) are periplasmic. The interval 49–220 (TRIYSRDGKL…SELNPERNYA (172 aa)) is transglycosylase. The active-site Proton donor; for transglycosylase activity is glutamate 87. Positions 398–711 (DVIVVEAIKE…SNVVLPIFID (314 aa)) are transpeptidase. Catalysis depends on serine 457, which acts as the Acyl-ester intermediate; for transpeptidase activity.

The protein in the N-terminal section; belongs to the glycosyltransferase 51 family. This sequence in the C-terminal section; belongs to the transpeptidase family.

Its subcellular location is the cell inner membrane. The enzyme catalyses [GlcNAc-(1-&gt;4)-Mur2Ac(oyl-L-Ala-gamma-D-Glu-L-Lys-D-Ala-D-Ala)](n)-di-trans,octa-cis-undecaprenyl diphosphate + beta-D-GlcNAc-(1-&gt;4)-Mur2Ac(oyl-L-Ala-gamma-D-Glu-L-Lys-D-Ala-D-Ala)-di-trans,octa-cis-undecaprenyl diphosphate = [GlcNAc-(1-&gt;4)-Mur2Ac(oyl-L-Ala-gamma-D-Glu-L-Lys-D-Ala-D-Ala)](n+1)-di-trans,octa-cis-undecaprenyl diphosphate + di-trans,octa-cis-undecaprenyl diphosphate + H(+). It catalyses the reaction Preferential cleavage: (Ac)2-L-Lys-D-Ala-|-D-Ala. Also transpeptidation of peptidyl-alanyl moieties that are N-acyl substituents of D-alanine.. It participates in cell wall biogenesis; peptidoglycan biosynthesis. Functionally, cell wall formation. Synthesis of cross-linked peptidoglycan from the lipid intermediates. The enzyme has a penicillin-insensitive transglycosylase N-terminal domain (formation of linear glycan strands) and a penicillin-sensitive transpeptidase C-terminal domain (cross-linking of the peptide subunits). This is Penicillin-binding protein 1A (mrcA) from Rickettsia conorii (strain ATCC VR-613 / Malish 7).